Consider the following 393-residue polypeptide: Short-chain dehydrogenase/reductase family 42E member 1 (393 aa).

The active-site Proton acceptor is the Y152. Position 156 (K156) interacts with NAD(+). 2 consecutive transmembrane segments (helical) span residues 282–302 (LPLT…FILG) and 371–391 (GLLV…SVIL).

The protein belongs to the 3-beta-HSD family.

The protein localises to the membrane. The polypeptide is Short-chain dehydrogenase/reductase family 42E member 1 (SDR42E1) (Homo sapiens (Human)).